Here is a 749-residue protein sequence, read N- to C-terminus: Cytosolic phospholipase A2 (749 aa).

Positions 1–178 (MSFIDPYQHI…MKKLLGPKNS (178 aa)) are phospholipid binding. Ser-2 is modified (phosphoserine). One can recognise a C2 domain in the interval 6–122 (PYQHIIVEHQ…KVGEKKEVPF (117 aa)). 7 residues coordinate Ca(2+): Asp-40, Thr-41, Asp-43, Asn-65, Asp-93, Ala-94, and Asn-95. The PLA2c domain maps to 140 to 740 (SCPDLRFSMA…SNVEARRFFN (601 aa)). Ser-228 serves as the catalytic Nucleophile. Phosphothreonine is present on Thr-268. The interval 409-457 (GSQSRGSTMEEELENITTKHIVSNDSSDSDDESHEPKGTENEDAGSDYQ) is disordered. A phosphoserine mark is found at Ser-434, Ser-435, and Ser-437. The residue at position 505 (Ser-505) is a Phosphoserine; by MAPK. At Ser-515 the chain carries Phosphoserine. Residue Lys-541 forms a Glycyl lysine isopeptide (Lys-Gly) (interchain with G-Cter in SUMO2) linkage. Asp-549 functions as the Proton acceptor in the catalytic mechanism. Lys-606 participates in a covalent cross-link: Glycyl lysine isopeptide (Lys-Gly) (interchain with G-Cter in SUMO2). Phosphoserine is present on residues Ser-727 and Ser-729.

As to quaternary structure, interacts with KAT5. Post-translationally, phosphorylated at both Ser-505 and Ser-727 in response to mitogenic stimuli. In terms of tissue distribution, expressed in various cells and tissues such as macrophages, neutrophils, fibroblasts and lung endothelium. Expressed in platelets (at protein level).

The protein localises to the cytoplasm. Its subcellular location is the golgi apparatus membrane. The protein resides in the nucleus envelope. The enzyme catalyses a 1,2-diacyl-sn-glycero-3-phosphocholine + H2O = a 1-acyl-sn-glycero-3-phosphocholine + a fatty acid + H(+). It catalyses the reaction a 1-O-alkyl-2-acyl-sn-glycero-3-phosphocholine + H2O = a 1-O-alkyl-sn-glycero-3-phosphocholine + a fatty acid + H(+). It carries out the reaction a 1-acyl-sn-glycero-3-phosphocholine + H2O = sn-glycerol 3-phosphocholine + a fatty acid + H(+). The catalysed reaction is 1-hexadecanoyl-2-(5Z,8Z,11Z,14Z-eicosatetraenoyl)-sn-glycero-3-phosphocholine + H2O = 1-hexadecanoyl-sn-glycero-3-phosphocholine + (5Z,8Z,11Z,14Z)-eicosatetraenoate + H(+). The enzyme catalyses 1,2-di-(5Z,8Z,11Z,14Z-eicosatetraenoyl)-sn-glycero-3-phosphocholine + H2O = 1-(5Z,8Z,11Z,14Z-eicosatetraenoyl)-sn-glycero-3-phosphocholine + (5Z,8Z,11Z,14Z)-eicosatetraenoate + H(+). It catalyses the reaction 1-octadecanoyl-2-(5Z,8Z,11Z,14Z-eicosatetraenoyl)-sn-glycero-3-phosphocholine + H2O = 1-octadecanoyl-sn-glycero-3-phosphocholine + (5Z,8Z,11Z,14Z)-eicosatetraenoate + H(+). It carries out the reaction 1-hexadecanoyl-2-(9Z,12Z-octadecadienoyl)-sn-glycero-3-phosphocholine + H2O = (9Z,12Z)-octadecadienoate + 1-hexadecanoyl-sn-glycero-3-phosphocholine + H(+). The catalysed reaction is 1-octadecanoyl-2-(9Z,12Z,15Z-octadecatrienoyl)-sn-glycero-3-phosphocholine + H2O = (9Z,12Z,15Z)-octadecatrienoate + 1-octadecanoyl-sn-glycero-3-phosphocholine + H(+). The enzyme catalyses 1-(5Z,8Z,11Z,14Z-eicosatetraenoyl)-2-hexadecanoyl-sn-glycero-3-phosphocholine + H2O = 1-(5Z,8Z,11Z,14Z-eicosatetraenoyl)-sn-glycero-3-phosphocholine + hexadecanoate + H(+). It catalyses the reaction 1-O-hexadecyl-2-(5Z,8Z,11Z,14Z)-eicosatetraenoyl-sn-glycero-3-phosphocholine + H2O = 1-O-hexadecyl-sn-glycero-3-phosphocholine + (5Z,8Z,11Z,14Z)-eicosatetraenoate + H(+). It carries out the reaction 1,2-di-(9Z-octadecenoyl)-sn-glycero-3-phospho-(1'-sn-glycerol) + H2O = 1-(9Z-octadecenoyl)-sn-glycero-3-phospho-(1'-sn-glycerol) + (9Z)-octadecenoate + H(+). The catalysed reaction is 1-octadecanoyl-2-(5Z,8Z,11Z,14Z-eicosatetraenoyl)-sn-glycero-3-phosphate + H2O = 1-octadecanoyl-sn-glycero-3-phosphate + (5Z,8Z,11Z,14Z)-eicosatetraenoate + H(+). The enzyme catalyses 1-hexadecanoyl-sn-glycero-3-phosphocholine + H2O = sn-glycerol 3-phosphocholine + hexadecanoate + H(+). It catalyses the reaction 2-(prostaglandin E2)-sn-glycero-3-phosphoethanolamine + H2O = sn-glycero-3-phosphoethanolamine + prostaglandin E2 + H(+). It carries out the reaction 2-[(15S)-hydroxy-(5Z,8Z,11Z,13E)-eicosatetraenoyl]-sn-glycero-3-phosphocholine + H2O = (15S)-hydroxy-(5Z,8Z,11Z,13E)-eicosatetraenoate + sn-glycerol 3-phosphocholine + H(+). The catalysed reaction is 2-[(15R)-hydroxy-(5Z,8Z,11Z,13E)-eicosatetraenoyl]-sn-glycero-3-phosphocholine + H2O = (15R)-hydroxy-(5Z,8Z,11Z,13E)-eicosatetraenoate + sn-glycerol 3-phosphocholine + H(+). The enzyme catalyses 2-(prostaglandin E2)-sn-glycero-3-phosphocholine + H2O = prostaglandin E2 + sn-glycerol 3-phosphocholine + H(+). It catalyses the reaction 2-[(11R)-hydroxy-(5Z,8Z,12E,14Z)-eicosatetraenoyl]-sn-glycero-3-phosphocholine + H2O = (11R)-hydroxy-(5Z,8Z,12E,14Z)-eicosatetraenoate + sn-glycerol 3-phosphocholine + H(+). It carries out the reaction 1-(5Z,8Z,11Z,14Z-eicosatetraenoyl)-2-O-hexadecyl-sn-glycero-3-phosphocholine + H2O = 2-O-hexadecyl-sn-glycero-3-phosphocholine + (5Z,8Z,11Z,14Z)-eicosatetraenoate + H(+). The catalysed reaction is 1-octadecanoyl-2-(5Z,8Z,11Z,14Z-eicosatetraenoyl)-sn-glycero-3-phosphocholine + glycerol = 1-(5Z,8Z,11Z,14Z-eicosatetraenoyl)-glycerol + 1-octadecanoyl-sn-glycero-3-phosphocholine. The enzyme catalyses 1-octadecanoyl-2-(9Z,12Z,15Z-octadecatrienoyl)-sn-glycero-3-phosphocholine + glycerol = 1-(9Z,12Z,15Z-octadecatrienoyl)-glycerol + 1-octadecanoyl-sn-glycero-3-phosphocholine. It participates in membrane lipid metabolism; glycerophospholipid metabolism. Its pathway is lipid metabolism; arachidonate metabolism. It functions in the pathway lipid metabolism; prostaglandin biosynthesis. The protein operates within lipid metabolism; leukotriene B4 biosynthesis. Activated by cytosolic calcium, which is necessary for binding to membrane lipids. Activated by phosphorylation in response to mitogenic stimuli. Activated by ceramide-1-phosphate. Binding (via C2 domain) to ceramide-1-phosphate increases the affinity for membrane lipids. Can be activated by phosphoinositides in the absence of calcium. Inhibited by ANXA5 in a calcium- and substrate-dependent way. Has primarily calcium-dependent phospholipase and lysophospholipase activities, with a major role in membrane lipid remodeling and biosynthesis of lipid mediators of the inflammatory response. Plays an important role in embryo implantation and parturition through its ability to trigger prostanoid production. Preferentially hydrolyzes the ester bond of the fatty acyl group attached at sn-2 position of phospholipids (phospholipase A2 activity). Selectively hydrolyzes sn-2 arachidonoyl group from membrane phospholipids, providing the precursor for eicosanoid biosynthesis via the cyclooxygenase pathway. In an alternative pathway of eicosanoid biosynthesis, hydrolyzes sn-2 fatty acyl chain of eicosanoid lysophopholipids to release free bioactive eicosanoids. Hydrolyzes the ester bond of the fatty acyl group attached at sn-1 position of phospholipids (phospholipase A1 activity) only if an ether linkage rather than an ester linkage is present at the sn-2 position. This hydrolysis is not stereospecific. Has calcium-independent phospholipase A2 and lysophospholipase activities in the presence of phosphoinositides. Has O-acyltransferase activity. Catalyzes the transfer of fatty acyl chains from phospholipids to a primary hydroxyl group of glycerol (sn-1 or sn-3), potentially contributing to monoacylglycerol synthesis. The protein is Cytosolic phospholipase A2 (PLA2G4A) of Homo sapiens (Human).